Reading from the N-terminus, the 145-residue chain is Putative sterol 14-demethylase-like protein (145 aa).

Residues 5 to 25 traverse the membrane as a helical segment; sequence YYTLLKTSVAIIIVFVVAKLI.

It belongs to the cytochrome P450 family. As to expression, expressed specifically in roots.

It localises to the membrane. The polypeptide is Putative sterol 14-demethylase-like protein (CYP51G2) (Arabidopsis thaliana (Mouse-ear cress)).